Here is a 1465-residue protein sequence, read N- to C-terminus: MDVLEMLRASASGSYNTIFSEAWCQYVSKQITATMYMYCALGMMGVLFLAWFMYFKRMARLRLRDEIARSISAVTNSSGDLRGLRFRKRDKMLFYGRRMLRKMKNVSGQMYSSGKGYKRRAVMRFARRILQLRRDNMPLEMRTVEPPAEYLEETIEGSDRVPPDALYMLQSIRIFGHFEKPVFLRLCKHTQLLELMAGDYLFKITDPDDSVYIVQSGMINVYISNADGSTLSLKTVRKGESVTSLLSFIDVLSGNPSYYKTVTAKAIEKSVVIRLPMQAFEEVFQDNPDVMIRVIQVIMIRLQRVLFTALRNYLGLNAELVQNHMRYKSVSTMSGPINSQTSQSSRQTPNGPPMGISHPLNLMQSTASGTGSGSGSGVSVTVTRPPPSPSRHSREEHTLSDPNPNPDGSVHGTSNLFTEVHGDAPNADLFHQQQQSVGNLSTRRSSITQMTPDGSHSCPPAPGVTTSIDMRLVQSSAVESLRKELGLSEEDAHIIEPFVELRELEPNVTLITEGNADDVCVWFVMTGTLAVYQSNQDATRAKQDKSDMLIHFVHPGEIVGGLAMLTGEASAYTIRSRSNSRIAFIRRAAIYQIMRQRPRIVLDLGNGVVRRLSPLVRQCDYALDWIFLESGRAVYRQDESSDSTYIVLSGRMRSVITHPGGKKEIVGEYGKGDLVGIVEMITETSRTTTVMAVRDSELAKLPEGLFNAIKLRYPIVVTKLISFLSHRFLGSMQTRSGSGAPGAPVEANPVTHKYSTVALVPITDEVPLTPFTYELYHSLCAIGPVLRLTSDVVRKQLGPNIFEAANEYRLTSWLAQQEDRNIITLYQCDSSLSAWTQRCMRQADVILIVGLGDRSHLVGKFEREIDRLAMRTQKELVLLYPEATNAKPANTLSWLNARPWVTKHHHVLCVKRIFTRKSQYRINDLYSRVLLSEPNMHSDFSRLARWLTGNSIGLVLGGGGARGAAHIGMLKAIQEAGIPVDMVGGVSIGALMGALWCSERNITTVTQKAREWSKKMTKWFLQLLDLTYPITSMFSGREFNKTIHDTFGDVSIEDLWIPYFTLTTDITASCHRIHTNGSLWRYVRSSMSLSGYMPPLCDPKDGHLLLDGGYVNNLPGHLWRYCRASMSIAGVFPPFCDYRDGHLLLDGCYTNNVPADVMHNLGAAHIIAIDVGSQDDTDLTNYGDDLSGWWLLYKKWNPFTSPVKVPDLPDIQSRLAYVSCVRQLEEVKNSDYCEYIRPPIDKYKTLAFGSFDEIRDVGYVFGKNYFENMAKAGRLGRFNQWFNKEPPKRVNHASLNEYTFIDLAQIVCRLPETYAVNTADLFSEDEDCDGYISEPTTLNTDRRRIQVPRAGNSLSFSETEMDSDVELDLKLERKTDKSTQSSPPTSSRTSMRGKEEARHMDNWHWGAKHKNETGSGATEGIHTSTEQEQEHQQQQQQDQGVRAEQLVYKDEDKENRSSANNETKN.

The Lumenal segment spans residues 1 to 34 (MDVLEMLRASASGSYNTIFSEAWCQYVSKQITAT). A helical transmembrane segment spans residues 35-55 (MYMYCALGMMGVLFLAWFMYF). Residues 56 to 1465 (KRMARLRLRD…RSSANNETKN (1410 aa)) are Cytoplasmic-facing. A nucleoside 3',5'-cyclic phosphate is bound at residue 174 to 301 (IFGHFEKPVF…IRVIQVIMIR (128 aa)). Polar residues-rich tracts occupy residues 331 to 349 (STMS…RQTP) and 434 to 454 (QQSV…TPDG). 2 disordered regions span residues 331–421 (STMS…TEVH) and 434–460 (QQSV…SCPP). Phosphoserine is present on residues S446 and S455. A nucleoside 3',5'-cyclic phosphate contacts are provided by residues 484–611 (ELGL…VVRR) and 600–727 (IVLD…LSHR). A PNPLA domain is found at 954–1120 (LVLGGGGARG…VNNLPGHLWR (167 aa)). Residues 958–963 (GGGARG) carry the GXGXXG motif. A GXSXG motif is present at residues 985 to 989 (GVSIG). S987 functions as the Nucleophile in the catalytic mechanism. The active-site Proton acceptor is the D1107. Positions 1107-1109 (DGG) match the DGA/G motif. The residue at position 1201 (S1201) is a Phosphoserine. The disordered stretch occupies residues 1371–1465 (LERKTDKSTQ…RSSANNETKN (95 aa)). Positions 1378–1390 (STQSSPPTSSRTS) are enriched in low complexity. The segment covering 1392-1402 (RGKEEARHMDN) has biased composition (basic and acidic residues). The segment covering 1413–1424 (TGSGATEGIHTS) has biased composition (polar residues). The span at 1447–1456 (VYKDEDKENR) shows a compositional bias: basic and acidic residues.

This sequence belongs to the NTE family. Interacts with Pka-C3; interaction inhibits the catalytic function of Pka-C3 and the esterase activity of sws.

Its subcellular location is the endoplasmic reticulum membrane. It carries out the reaction a 1-acyl-sn-glycero-3-phosphocholine + H2O = sn-glycerol 3-phosphocholine + a fatty acid + H(+). Phospholipase B that deacylates intracellular phosphatidylcholine (PtdCho), generating glycerophosphocholine (GroPtdCho). This deacylation occurs at both sn-2 and sn-1 positions of PtdCho. Its specific chemical modification by certain organophosphorus (OP) compounds leads to distal axonopathy. Plays a role in the signaling mechanism between neurons and glia that regulates glia wrapping during development of the adult brain. Essential for membrane lipid homeostasis and cell survival in both neurons and glia of the adult brain. The protein is Neuropathy target esterase sws of Drosophila erecta (Fruit fly).